We begin with the raw amino-acid sequence, 833 residues long: Protein PAT1 homolog 1 (833 aa).

Disordered regions lie at residues 279 to 313 (DMREDNKFSHPPPGFNQNVQPRMDPSLSPGGMHGM), 398 to 427 (NIRQNGPQFSHPSGPHSPGNRVQRKHSGMP), and 492 to 549 (EEAT…DKKL). Residues 303–313 (PSLSPGGMHGM) show a composition bias toward low complexity. A compositionally biased stretch (polar residues) spans 398–408 (NIRQNGPQFSH).

Belongs to the PAT1 family.

It localises to the cytoplasm. The protein localises to the P-body. RNA-binding protein involved in deadenylation-dependent decapping of mRNAs, leading to the degradation of mRNAs. Acts as a scaffold protein that connects deadenylation and decapping machinery. Required for the recruitment of P-body components such as cgh-1 in somatic blastomeres. May play a role in recruiting the decapping enzyme dcap-1 to cytoplasmic puncta in the cell body of the posterior touch receptor neuron, PLM. The chain is Protein PAT1 homolog 1 from Caenorhabditis elegans.